Consider the following 470-residue polypeptide: Annexin C1 (470 aa).

The disordered stretch occupies residues 1–143; the sequence is MYGQQNNYGA…QGQSPMMYLG (143 aa). Positions 15 to 34 are enriched in low complexity; the sequence is QWGQAPPQGYQPGYQNGPPA. Residues 82-92 show a composition bias toward pro residues; the sequence is PQPPFGAPSPA. Low complexity-rich tracts occupy residues 93-110 and 128-138; these read PAGY…YGAP and GYGSQPQGQSP. Annexin repeat units follow at residues 161–232, 233–304, 316–388, and 395–468; these read YDAR…LLSL, GPLG…MALS, QLVQ…FIAR, and DGVV…GIIE.

Belongs to the annexin family.

Does not appear to play a major role in virulence. May play a role in titan cell formation. The sequence is that of Annexin C1 from Cryptococcus neoformans var. grubii serotype A (strain H99 / ATCC 208821 / CBS 10515 / FGSC 9487) (Filobasidiella neoformans var. grubii).